A 125-amino-acid chain; its full sequence is MEAALNIASPSLPGVMPGQLEFTTSAAAKVSELIVEEGNPNLKLRLYVTGGGCSGFSYGFAFDDQTAEDDTLIVTEGVALVVDAMSLQYVLGARVDFEDGLEGSRFVIHNPNAQSTCGCGSSFSV.

Iron-sulfur cluster is bound by residues Cys-53, Cys-117, and Cys-119.

It belongs to the HesB/IscA family. In terms of assembly, homodimer. Iron-sulfur cluster is required as a cofactor.

Required for insertion of 4Fe-4S clusters. The polypeptide is Putative iron-sulfur cluster insertion protein ErpA 2 (Polaromonas naphthalenivorans (strain CJ2)).